The sequence spans 521 residues: CDP-diacylglycerol--glycerol-3-phosphate 3-phosphatidyltransferase (521 aa).

91-98 (ASLYLGKS) contacts ATP. PLD phosphodiesterase domains are found at residues 177 to 203 (GLGL…SNDY) and 419 to 457 (NGWS…TRRA). Residues H182, K184, and D189 contribute to the active site.

This sequence belongs to the CDP-alcohol phosphatidyltransferase class-II family.

Its subcellular location is the mitochondrion. It carries out the reaction a CDP-1,2-diacyl-sn-glycerol + sn-glycerol 3-phosphate = a 1,2-diacyl-sn-glycero-3-phospho-(1'-sn-glycero-3'-phosphate) + CMP + H(+). The protein operates within phospholipid metabolism; phosphatidylglycerol biosynthesis; phosphatidylglycerol from CDP-diacylglycerol: step 1/2. Its function is as follows. Essential for the viability of mitochondrial petite mutant. Catalyzes the committed step to the synthesis of the acidic phospholipids. This chain is CDP-diacylglycerol--glycerol-3-phosphate 3-phosphatidyltransferase (PGS1), found in Saccharomyces pastorianus (Lager yeast).